Consider the following 338-residue polypeptide: Lipoate-protein ligase A (338 aa).

The BPL/LPL catalytic domain occupies 29–216; that stretch reads PATQRVLFLW…AFFSHYGERV (188 aa). ATP contacts are provided by residues Arg71, 76-79, and Lys134; that span reads GAVF. (R)-lipoate is bound at residue Lys134.

The protein belongs to the LplA family. In terms of assembly, monomer.

It localises to the cytoplasm. The catalysed reaction is L-lysyl-[lipoyl-carrier protein] + (R)-lipoate + ATP = N(6)-[(R)-lipoyl]-L-lysyl-[lipoyl-carrier protein] + AMP + diphosphate + H(+). It functions in the pathway protein modification; protein lipoylation via exogenous pathway; protein N(6)-(lipoyl)lysine from lipoate: step 1/2. Its pathway is protein modification; protein lipoylation via exogenous pathway; protein N(6)-(lipoyl)lysine from lipoate: step 2/2. In terms of biological role, catalyzes both the ATP-dependent activation of exogenously supplied lipoate to lipoyl-AMP and the transfer of the activated lipoyl onto the lipoyl domains of lipoate-dependent enzymes. The sequence is that of Lipoate-protein ligase A from Klebsiella pneumoniae (strain 342).